We begin with the raw amino-acid sequence, 108 residues long: Small ribosomal subunit protein bS16 (108 aa).

Positions 82–108 (ESKFSKNTQTENKKPVSKKTTKKSKDN) are disordered. Residues 96 to 108 (PVSKKTTKKSKDN) show a composition bias toward basic residues.

Belongs to the bacterial ribosomal protein bS16 family.

In Mycoplasma mycoides subsp. mycoides SC (strain CCUG 32753 / NCTC 10114 / PG1), this protein is Small ribosomal subunit protein bS16.